We begin with the raw amino-acid sequence, 290 residues long: Putative OX-2 membrane glycoprotein homolog (290 aa).

The N-terminal stretch at Met-1 to Ala-17 is a signal peptide. The Extracellular segment spans residues His-18–Val-267. In terms of domain architecture, Ig-like V-type spans Pro-23–Ser-135. The cysteines at positions 41 and 125 are disulfide-linked. N-linked (GlcNAc...) asparagine; by host glycans are attached at residues Asn-71, Asn-104, Asn-194, and Asn-202. In terms of domain architecture, Ig-like C2-type spans Pro-146–Thr-236. A helical membrane pass occupies residues Pro-268–Phe-288. Over Lys-289 to Ser-290 the chain is Cytoplasmic.

The protein localises to the membrane. The protein is Putative OX-2 membrane glycoprotein homolog (U85) of Homo sapiens (Human).